Here is a 567-residue protein sequence, read N- to C-terminus: Hydroxylamine reductase 2 (567 aa).

C5, C8, C17, and C23 together coordinate [4Fe-4S] cluster. 8 residues coordinate hybrid [4Fe-2O-2S] cluster: H262, E286, C330, C421, C449, C474, E509, and K511. C421 carries the post-translational modification Cysteine persulfide.

The protein belongs to the HCP family. It depends on [4Fe-4S] cluster as a cofactor. The cofactor is hybrid [4Fe-2O-2S] cluster.

It is found in the cytoplasm. It catalyses the reaction A + NH4(+) + H2O = hydroxylamine + AH2 + H(+). In terms of biological role, catalyzes the reduction of hydroxylamine to form NH(3) and H(2)O. The protein is Hydroxylamine reductase 2 of Clostridium acetobutylicum (strain ATCC 824 / DSM 792 / JCM 1419 / IAM 19013 / LMG 5710 / NBRC 13948 / NRRL B-527 / VKM B-1787 / 2291 / W).